A 258-amino-acid polypeptide reads, in one-letter code: Small ribosomal subunit protein mS23 (258 aa).

Residues Lys-230–Ala-239 are compositionally biased toward polar residues. A disordered region spans residues Lys-230–Leu-258. Positions Ala-241–Leu-258 are enriched in acidic residues.

It belongs to the mitochondrion-specific ribosomal protein mS23 family. Component of the mitochondrial small ribosomal subunit.

Its subcellular location is the mitochondrion. The protein is Small ribosomal subunit protein mS23 (RSM25) of Eremothecium gossypii (strain ATCC 10895 / CBS 109.51 / FGSC 9923 / NRRL Y-1056) (Yeast).